Here is a 190-residue protein sequence, read N- to C-terminus: MKRFMQIWKPAVVGFLLLTLVCGVVYPGIVTIIAGAAFQDKANGSIIERKLANGETGKYGSNEIGQTFTKPEYLIGRAASDGAATNLNPTSEEQKQLVEKRIAWWHKLDPTNNRVIPMDLVTASASGVDPDISEAAAAYQVDRISRERGISTKTVKEIIAEHTSNRLLGFWGEPTVNVLQVNLALDSLKM.

Residues 13-33 (VGFLLLTLVCGVVYPGIVTII) traverse the membrane as a helical segment.

It belongs to the KdpC family. As to quaternary structure, the system is composed of three essential subunits: KdpA, KdpB and KdpC.

It localises to the cell membrane. Its function is as follows. Part of the high-affinity ATP-driven potassium transport (or Kdp) system, which catalyzes the hydrolysis of ATP coupled with the electrogenic transport of potassium into the cytoplasm. This subunit acts as a catalytic chaperone that increases the ATP-binding affinity of the ATP-hydrolyzing subunit KdpB by the formation of a transient KdpB/KdpC/ATP ternary complex. The protein is Potassium-transporting ATPase KdpC subunit of Listeria welshimeri serovar 6b (strain ATCC 35897 / DSM 20650 / CCUG 15529 / CIP 8149 / NCTC 11857 / SLCC 5334 / V8).